Reading from the N-terminus, the 332-residue chain is Glycerol-3-phosphate dehydrogenase [NAD(P)+] (332 aa).

Residues S11, W12, R32, R33, and K106 each contribute to the NADPH site. Sn-glycerol 3-phosphate contacts are provided by K106 and G136. A140 provides a ligand contact to NADPH. The sn-glycerol 3-phosphate site is built by K191, D244, S254, R255, and N256. K191 (proton acceptor) is an active-site residue. Residue R255 coordinates NADPH. 2 residues coordinate NADPH: V280 and E282.

This sequence belongs to the NAD-dependent glycerol-3-phosphate dehydrogenase family.

It is found in the cytoplasm. It catalyses the reaction sn-glycerol 3-phosphate + NAD(+) = dihydroxyacetone phosphate + NADH + H(+). The catalysed reaction is sn-glycerol 3-phosphate + NADP(+) = dihydroxyacetone phosphate + NADPH + H(+). It functions in the pathway membrane lipid metabolism; glycerophospholipid metabolism. Catalyzes the reduction of the glycolytic intermediate dihydroxyacetone phosphate (DHAP) to sn-glycerol 3-phosphate (G3P), the key precursor for phospholipid synthesis. The sequence is that of Glycerol-3-phosphate dehydrogenase [NAD(P)+] from Corynebacterium aurimucosum (strain ATCC 700975 / DSM 44827 / CIP 107346 / CN-1) (Corynebacterium nigricans).